We begin with the raw amino-acid sequence, 104 residues long: Large ribosomal subunit protein bL28 (104 aa).

This sequence belongs to the bacterial ribosomal protein bL28 family.

This Wolbachia sp. subsp. Brugia malayi (strain TRS) protein is Large ribosomal subunit protein bL28.